The primary structure comprises 99 residues: Protein Frey (99 aa).

Residues Gly7–Leu29 traverse the membrane as a helical segment. The interval Pro65–Pro88 is disordered.

As to quaternary structure, interacts with SPPL2C (via active sites); the interaction stabilizes FREY1 protein and inhibits SPPL2C proteolytic activity. Interacts with IZUMO1; the interaction retains IZUMO1 at the endoplasmic reticulum membrane and coordinates IZUMO1 complex assembly.

Its subcellular location is the endoplasmic reticulum membrane. In terms of biological role, key regulator for male fertility expressed transiently in round spermatids where it recruits IZUMO1 at the endoplasmic reticulum (ER) membrane and coordinates the oolemmal binding multimeric complex (IZUMO1 complex) assembly. Upon complete assembly of the IZUMO1 complex, its ER retention is released, facilitating IZUMO1 complex export to the acrosome. Through the interaction with SPPL2C, inhibits its intramembrane protease activity directly accessing the catalytic center of an I-CLiP. The chain is Protein Frey from Ailuropoda melanoleuca (Giant panda).